The following is a 36-amino-acid chain: Termicin (36 aa).

3 disulfides stabilise this stretch: cysteine 2-cysteine 24, cysteine 7-cysteine 29, and cysteine 11-cysteine 31. Glycine 36 carries the post-translational modification Glycine amide.

As to expression, expressed in salivary glands and hemocytes.

It localises to the secreted. Functionally, weak activity against Gram-positive bacteria B.megaterium, S.pyogenes and M.luteus, strong activity against yeasts C.albicans, C.neoformans and S.cerevisiae and filamentous fungi F.oxysporum, F.culmorum, N.crassa and N.hematococca. Less active against filamentous fungus T.viride. Inactive against Gram-positive bacteria A.viridans and S.aureus, filamentous fungi A.fumigatus and B.bassiana and yeast C.glabrata. The protein is Termicin of Pseudacanthotermes spiniger.